The following is a 529-amino-acid chain: Bifunctional purine biosynthesis protein PurH (529 aa).

An MGS-like domain is found at 1-148 (MEQSFLPIRC…KNYKYVTVVV (148 aa)).

This sequence belongs to the PurH family.

It carries out the reaction (6R)-10-formyltetrahydrofolate + 5-amino-1-(5-phospho-beta-D-ribosyl)imidazole-4-carboxamide = 5-formamido-1-(5-phospho-D-ribosyl)imidazole-4-carboxamide + (6S)-5,6,7,8-tetrahydrofolate. The catalysed reaction is IMP + H2O = 5-formamido-1-(5-phospho-D-ribosyl)imidazole-4-carboxamide. It functions in the pathway purine metabolism; IMP biosynthesis via de novo pathway; 5-formamido-1-(5-phospho-D-ribosyl)imidazole-4-carboxamide from 5-amino-1-(5-phospho-D-ribosyl)imidazole-4-carboxamide (10-formyl THF route): step 1/1. The protein operates within purine metabolism; IMP biosynthesis via de novo pathway; IMP from 5-formamido-1-(5-phospho-D-ribosyl)imidazole-4-carboxamide: step 1/1. This Wigglesworthia glossinidia brevipalpis protein is Bifunctional purine biosynthesis protein PurH.